Here is a 253-residue protein sequence, read N- to C-terminus: MEVIPAIDILDGKCVRLYQGDYQQSQVFNDNPAIVAREWVNQGATRLHLVDLDGAKEGKSVNLSTIETILNDIAIPVQVGGGLRDLETVSNLLKIGVEKAILGTVAVEKPELVSELCQSFPGQIIVGIDARDGKVATRGWLETSEVEAIALGQDMAKRGASTIIYTDIHRDGTLSGPNLAALRELAESVEIPVIASGGISSLTDLLSLLSLEPLGVTGVIVGRALYTGAVNLSEAISAIGSGRWQDVPPNFFA.

The active-site Proton acceptor is Asp-8. The Proton donor role is filled by Asp-129.

This sequence belongs to the HisA/HisF family.

Its subcellular location is the cytoplasm. It carries out the reaction 1-(5-phospho-beta-D-ribosyl)-5-[(5-phospho-beta-D-ribosylamino)methylideneamino]imidazole-4-carboxamide = 5-[(5-phospho-1-deoxy-D-ribulos-1-ylimino)methylamino]-1-(5-phospho-beta-D-ribosyl)imidazole-4-carboxamide. It participates in amino-acid biosynthesis; L-histidine biosynthesis; L-histidine from 5-phospho-alpha-D-ribose 1-diphosphate: step 4/9. This chain is 1-(5-phosphoribosyl)-5-[(5-phosphoribosylamino)methylideneamino] imidazole-4-carboxamide isomerase, found in Microcystis aeruginosa (strain NIES-843 / IAM M-2473).